The sequence spans 1326 residues: Coiled-coil domain-containing protein 171 (1326 aa).

Coiled-coil stretches lie at residues 53–294 (TTKH…RAAH), 323–391 (AEAV…RLQY), 450–561 (SFSV…AFHK), 597–630 (SELCAVLQENVDALIADLNRANEKIRHLEYICKN), 660–707 (WHRQ…EQLV), 765–792 (FKLEIRTLAQALSTVEEKKQEEAKMKKK), 979–1143 (FTQR…KECV), and 1217–1241 (IMTLEKEMTSHRSHIAALKSELHTA). The segment at 1306–1326 (SSHSSPVTMSANANRPTQIGL) is disordered.

This chain is Coiled-coil domain-containing protein 171 (CCDC171), found in Homo sapiens (Human).